Here is a 186-residue protein sequence, read N- to C-terminus: Ribosome-recycling factor (186 aa).

This sequence belongs to the RRF family.

It localises to the cytoplasm. Functionally, responsible for the release of ribosomes from messenger RNA at the termination of protein biosynthesis. May increase the efficiency of translation by recycling ribosomes from one round of translation to another. This Bartonella tribocorum (strain CIP 105476 / IBS 506) protein is Ribosome-recycling factor.